The chain runs to 116 residues: Spexin (116 aa).

The N-terminal stretch at 1-26 is a signal peptide; it reads MKGLRSLAATTLALFLVFVFLGNSSC. A propeptide spanning residues 27–35 is cleaved from the precursor; the sequence is APQRLLERR. Q49 is subject to Glutamine amide. 2 consecutive propeptides follow at residues 50-116 and 74-116; these read GRRF…LLNW and PNPQ…LLNW. The segment covering 55–73 has biased composition (basic and acidic residues); it reads SDQSRRKDLSDRPLPERRS. The tract at residues 55–77 is disordered; it reads SDQSRRKDLSDRPLPERRSPNPQ.

This sequence belongs to the spexin family. Expressed in the type I glomic cells within the carotid body (at protein level). Expressed predominantly in pancreas, testis, kidney, brain and placenta. Expressed in submucosal layer of esophagus and stomach fundus.

The protein localises to the secreted. Its subcellular location is the extracellular space. It localises to the cytoplasmic vesicle. It is found in the secretory vesicle. Plays a role as a central modulator of cardiovascular and renal function and nociception. Also plays a role in energy metabolism and storage. Inhibits adrenocortical cell proliferation with minor stimulation on corticosteroid release. In terms of biological role, acts as a ligand for galanin receptors GALR2 and GALR3. Intracerebroventricular administration of the peptide induces an increase in arterial blood pressure, a decrease in both heart rate and renal excretion and delayed natriuresis. Intraventricular administration of the peptide induces antinociceptive activity. Also induces contraction of muscarinic-like stomach smooth muscles. Intraperitoneal administration of the peptide induces a reduction in food consumption and body weight. Inhibits long chain fatty acid uptake into adipocytes. Its function is as follows. Intracerebroventricular administration of the peptide induces a decrease in heart rate, but no change in arterial pressure, and an increase in urine flow rate. Intraventricular administration of the peptide induces antinociceptive activity. This chain is Spexin (SPX), found in Homo sapiens (Human).